The chain runs to 211 residues: Large ribosomal subunit protein bL25 (211 aa).

The tract at residues glycine 186–glycine 211 is disordered.

It belongs to the bacterial ribosomal protein bL25 family. CTC subfamily. In terms of assembly, part of the 50S ribosomal subunit; part of the 5S rRNA/L5/L18/L25 subcomplex. Contacts the 5S rRNA. Binds to the 5S rRNA independently of L5 and L18.

Functionally, this is one of the proteins that binds to the 5S RNA in the ribosome where it forms part of the central protuberance. The protein is Large ribosomal subunit protein bL25 of Gloeobacter violaceus (strain ATCC 29082 / PCC 7421).